The primary structure comprises 301 residues: Probable alpha-L-glutamate ligase 1 (301 aa).

The ATP-grasp domain maps to 104–287 (LQLLSRKGIG…VTEPIVEYIE (184 aa)). ATP is bound by residues Lys-141, 178-179 (EY), Asp-187, and 211-213 (RSN). Mg(2+)-binding residues include Asp-248, Glu-260, and Asn-262. Mn(2+) is bound by residues Asp-248, Glu-260, and Asn-262.

Belongs to the RimK family. Mg(2+) is required as a cofactor. Requires Mn(2+) as cofactor.

This Shewanella oneidensis (strain ATCC 700550 / JCM 31522 / CIP 106686 / LMG 19005 / NCIMB 14063 / MR-1) protein is Probable alpha-L-glutamate ligase 1.